A 509-amino-acid chain; its full sequence is ATP synthase subunit alpha (509 aa).

171 to 178 contacts ATP; that stretch reads GDRQTGKT.

This sequence belongs to the ATPase alpha/beta chains family. As to quaternary structure, F-type ATPases have 2 components, CF(1) - the catalytic core - and CF(0) - the membrane proton channel. CF(1) has five subunits: alpha(3), beta(3), gamma(1), delta(1), epsilon(1). CF(0) has three main subunits: a(1), b(2) and c(9-12). The alpha and beta chains form an alternating ring which encloses part of the gamma chain. CF(1) is attached to CF(0) by a central stalk formed by the gamma and epsilon chains, while a peripheral stalk is formed by the delta and b chains.

The protein resides in the cell inner membrane. The catalysed reaction is ATP + H2O + 4 H(+)(in) = ADP + phosphate + 5 H(+)(out). Produces ATP from ADP in the presence of a proton gradient across the membrane. The alpha chain is a regulatory subunit. This chain is ATP synthase subunit alpha, found in Neorickettsia sennetsu (strain ATCC VR-367 / Miyayama) (Ehrlichia sennetsu).